The sequence spans 364 residues: D-alanine--D-alanine ligase (364 aa).

The ATP-grasp domain maps to 145–354 (KMAFEQAGLP…FPELVDKLVQ (210 aa)). 181–236 (EASLGYPCFVKPANLGSSVGISKVRSRQELEDALDNAANYDRRIIIEAGVAAREVE) contacts ATP. Residues Asp307, Glu321, and Asn323 each coordinate Mg(2+).

Belongs to the D-alanine--D-alanine ligase family. The cofactor is Mg(2+). Requires Mn(2+) as cofactor.

It localises to the cytoplasm. It catalyses the reaction 2 D-alanine + ATP = D-alanyl-D-alanine + ADP + phosphate + H(+). It participates in cell wall biogenesis; peptidoglycan biosynthesis. In terms of biological role, cell wall formation. In Nostoc sp. (strain PCC 7120 / SAG 25.82 / UTEX 2576), this protein is D-alanine--D-alanine ligase.